We begin with the raw amino-acid sequence, 514 residues long: AAA-ATPase ASD, mitochondrial (514 aa).

The helical transmembrane segment at 7-24 (VWTNTGSALASLVFIYTI) threads the bilayer. Residue 250-257 (GPPGTGKS) participates in ATP binding. Disordered regions lie at residues 311–342 (GQRK…ENKG) and 467–514 (KEEA…TMKD). Basic and acidic residues-rich tracts occupy residues 331-342 (KQMKKDQGENKG) and 467-502 (KEEA…KEEK).

This sequence belongs to the AAA ATPase family. BCS1 subfamily. Mg(2+) serves as cofactor. Expressed in seeds, specifically in the embryo.

The protein resides in the mitochondrion membrane. The catalysed reaction is ATP + H2O = ADP + phosphate + H(+). Required to regulate morphology and anatomy during seed maturation. The sequence is that of AAA-ATPase ASD, mitochondrial (AATP1) from Arabidopsis thaliana (Mouse-ear cress).